The primary structure comprises 101 residues: MMLEYVLGLSAYLFSIGIYGLITSRNMVRALMCLELILNAVNLNFVTFSDFFDSRQLKGNILSIFVISIAAAEAAIGPAIVSSIYRNRKSIRINQLNLLNK.

3 helical membrane-spanning segments follow: residues 2–22, 32–52, and 61–81; these read MLEYVLGLSAYLFSIGIYGLI, MCLELILNAVNLNFVTFSDFF, and ILSIFVISIAAAEAAIGPAIV.

Belongs to the complex I subunit 4L family. As to quaternary structure, NDH is composed of at least 16 different subunits, 5 of which are encoded in the nucleus.

The protein localises to the plastid. Its subcellular location is the chloroplast thylakoid membrane. It carries out the reaction a plastoquinone + NADH + (n+1) H(+)(in) = a plastoquinol + NAD(+) + n H(+)(out). The catalysed reaction is a plastoquinone + NADPH + (n+1) H(+)(in) = a plastoquinol + NADP(+) + n H(+)(out). In terms of biological role, NDH shuttles electrons from NAD(P)H:plastoquinone, via FMN and iron-sulfur (Fe-S) centers, to quinones in the photosynthetic chain and possibly in a chloroplast respiratory chain. The immediate electron acceptor for the enzyme in this species is believed to be plastoquinone. Couples the redox reaction to proton translocation, and thus conserves the redox energy in a proton gradient. The sequence is that of NAD(P)H-quinone oxidoreductase subunit 4L, chloroplastic from Populus alba (White poplar).